Consider the following 201-residue polypeptide: Superoxide dismutase [Mn] (201 aa).

The Mn(2+) site is built by H27, H81, D163, and H167.

Belongs to the iron/manganese superoxide dismutase family. In terms of assembly, homodimer. Mn(2+) is required as a cofactor.

Its subcellular location is the secreted. The catalysed reaction is 2 superoxide + 2 H(+) = H2O2 + O2. Its function is as follows. Destroys superoxide anion radicals which are normally produced within the cells and which are toxic to biological systems. The sequence is that of Superoxide dismutase [Mn] (sodA) from Streptococcus pyogenes serotype M1.